Consider the following 465-residue polypeptide: ATP synthase subunit beta (465 aa).

149–156 (GGAGVGKT) is an ATP binding site.

This sequence belongs to the ATPase alpha/beta chains family. As to quaternary structure, F-type ATPases have 2 components, CF(1) - the catalytic core - and CF(0) - the membrane proton channel. CF(1) has five subunits: alpha(3), beta(3), gamma(1), delta(1), epsilon(1). CF(0) has three main subunits: a(1), b(2) and c(9-12). The alpha and beta chains form an alternating ring which encloses part of the gamma chain. CF(1) is attached to CF(0) by a central stalk formed by the gamma and epsilon chains, while a peripheral stalk is formed by the delta and b chains.

The protein localises to the cell inner membrane. The enzyme catalyses ATP + H2O + 4 H(+)(in) = ADP + phosphate + 5 H(+)(out). Functionally, produces ATP from ADP in the presence of a proton gradient across the membrane. The catalytic sites are hosted primarily by the beta subunits. In Dictyoglomus thermophilum (strain ATCC 35947 / DSM 3960 / H-6-12), this protein is ATP synthase subunit beta.